Reading from the N-terminus, the 466-residue chain is 23S rRNA (uracil(1939)-C(5))-methyltransferase RlmD (466 aa).

The TRAM domain occupies 1–54 (MVDVLNIESLDLEARGIAHRDGKVLFVEGALPGERVTVQTVRRKPSYEIAKVEE). [4Fe-4S] cluster-binding residues include cysteine 67, cysteine 73, cysteine 76, and cysteine 155. 6 residues coordinate S-adenosyl-L-methionine: glutamine 264, phenylalanine 293, asparagine 298, glutamate 314, asparagine 342, and aspartate 363. Residue cysteine 393 is the Nucleophile of the active site.

It belongs to the class I-like SAM-binding methyltransferase superfamily. RNA M5U methyltransferase family. RlmD subfamily.

It carries out the reaction uridine(1939) in 23S rRNA + S-adenosyl-L-methionine = 5-methyluridine(1939) in 23S rRNA + S-adenosyl-L-homocysteine + H(+). Its function is as follows. Catalyzes the formation of 5-methyl-uridine at position 1939 (m5U1939) in 23S rRNA. The polypeptide is 23S rRNA (uracil(1939)-C(5))-methyltransferase RlmD (Bordetella bronchiseptica (strain ATCC BAA-588 / NCTC 13252 / RB50) (Alcaligenes bronchisepticus)).